Here is a 383-residue protein sequence, read N- to C-terminus: MSNHWLLPENIADVLPSEARKIEELRRRMLDLFRTYGYELVMPPMLEYLESLLTGTGHDLDLRTLKLVDQLSGRTMGLRADITPQVARIDAHLLNRPGVTRLCYAGNVLHARPAGFHATREPIQVGAEIYGHAGLEADVEIQELMLAALQAAGLSDIRIDLCHAGILEALLDGLPSIRRIEDALFAALETKDVSALREITQGMPQTERDALLALPTLYGGVEVIDRARATLPASPAIGRALDELVALATQVRGASINIDLSDLRGYHYHSGVMFAAYVAGLPNYVARGGRYDKVGEAFGRARPATGFSLDLREVAALSPIEVRAQAIFAPWDADPALRAAIVALRAAGEIVIQSLPGHTKELDEFNCDRQLVRQEAGWVVAPR.

This sequence belongs to the class-II aminoacyl-tRNA synthetase family. HisZ subfamily. As to quaternary structure, heteromultimer composed of HisG and HisZ subunits.

The protein resides in the cytoplasm. Its pathway is amino-acid biosynthesis; L-histidine biosynthesis; L-histidine from 5-phospho-alpha-D-ribose 1-diphosphate: step 1/9. Its function is as follows. Required for the first step of histidine biosynthesis. May allow the feedback regulation of ATP phosphoribosyltransferase activity by histidine. This chain is ATP phosphoribosyltransferase regulatory subunit, found in Cupriavidus pinatubonensis (strain JMP 134 / LMG 1197) (Cupriavidus necator (strain JMP 134)).